The sequence spans 182 residues: Peptidyl-tRNA hydrolase (182 aa).

Residue Tyr-14 coordinates tRNA. The active-site Proton acceptor is His-19. TRNA-binding residues include Phe-64, Asn-66, and Asn-112.

The protein belongs to the PTH family. Monomer.

The protein localises to the cytoplasm. It catalyses the reaction an N-acyl-L-alpha-aminoacyl-tRNA + H2O = an N-acyl-L-amino acid + a tRNA + H(+). Its function is as follows. Hydrolyzes ribosome-free peptidyl-tRNAs (with 1 or more amino acids incorporated), which drop off the ribosome during protein synthesis, or as a result of ribosome stalling. Catalyzes the release of premature peptidyl moieties from peptidyl-tRNA molecules trapped in stalled 50S ribosomal subunits, and thus maintains levels of free tRNAs and 50S ribosomes. This chain is Peptidyl-tRNA hydrolase, found in Wolbachia sp. subsp. Drosophila simulans (strain wRi).